A 227-amino-acid chain; its full sequence is uncharacterized protein (227 aa).

17–24 lines the ATP pocket; sequence GKTGCGKT.

This is an uncharacterized protein from Methanocaldococcus jannaschii (strain ATCC 43067 / DSM 2661 / JAL-1 / JCM 10045 / NBRC 100440) (Methanococcus jannaschii).